A 159-amino-acid polypeptide reads, in one-letter code: uncharacterized protein (159 aa).

Helical transmembrane passes span threonine 5–valine 27, alanine 34–valine 51, serine 61–leucine 83, and phenylalanine 103–valine 125.

The protein resides in the cell membrane. This is an uncharacterized protein from Treponema pallidum (strain Nichols).